We begin with the raw amino-acid sequence, 279 residues long: Tryptophan synthase alpha chain (279 aa).

Residues Glu-50 and Asp-61 each act as proton acceptor in the active site.

This sequence belongs to the TrpA family. In terms of assembly, tetramer of two alpha and two beta chains.

The catalysed reaction is (1S,2R)-1-C-(indol-3-yl)glycerol 3-phosphate + L-serine = D-glyceraldehyde 3-phosphate + L-tryptophan + H2O. The protein operates within amino-acid biosynthesis; L-tryptophan biosynthesis; L-tryptophan from chorismate: step 5/5. The alpha subunit is responsible for the aldol cleavage of indoleglycerol phosphate to indole and glyceraldehyde 3-phosphate. This is Tryptophan synthase alpha chain from Allorhizobium ampelinum (strain ATCC BAA-846 / DSM 112012 / S4) (Agrobacterium vitis (strain S4)).